Consider the following 163-residue polypeptide: Photosystem II extrinsic protein V (163 aa).

The first 26 residues, 1–26 (MLKKCVWLAVALCLCLWQFTMGTALA), serve as a signal peptide directing secretion. Heme c-binding residues include His-67 and His-118.

Belongs to the cytochrome c family. PsbV subfamily. PSII is composed of 1 copy each of membrane proteins PsbA, PsbB, PsbC, PsbD, PsbE, PsbF, PsbH, PsbI, PsbJ, PsbK, PsbL, PsbM, PsbT, PsbX, PsbY, PsbZ, Psb30/Ycf12, peripheral proteins PsbO, CyanoQ (PsbQ), PsbU, PsbV and a large number of cofactors. It forms dimeric complexes. Heme c is required as a cofactor.

The protein resides in the cellular thylakoid membrane. Its function is as follows. One of the extrinsic, lumenal subunits of photosystem II (PSII). PSII is a light-driven water plastoquinone oxidoreductase, using light energy to abstract electrons from H(2)O, generating a proton gradient subsequently used for ATP formation. The extrinsic proteins stabilize the structure of photosystem II oxygen-evolving complex (OEC), the ion environment of oxygen evolution and protect the OEC against heat-induced inactivation. Low-potential cytochrome c that plays a role in the OEC of PSII. This chain is Photosystem II extrinsic protein V, found in Thermosynechococcus vestitus (strain NIES-2133 / IAM M-273 / BP-1).